A 1070-amino-acid polypeptide reads, in one-letter code: DNA double-strand break repair Rad50 ATPase (1070 aa).

ATP is bound by residues R12, 32-38 (NGSGKSS), and Q142. 3 coiled-coil regions span residues 227 to 257 (LEEL…RLQE), 369 to 403 (ECRT…EKAG), and 449 to 478 (LREL…KEIR). In terms of domain architecture, Zinc-hook spans 508-607 (LENLEDFNEL…KLNRLKEAKK (100 aa)). The Zn(2+) site is built by C555 and C558. Coiled-coil stretches lie at residues 570-614 (TAEE…QAYD) and 878-908 (LKRL…ADEL). 969–974 (LLSGGE) contacts ATP.

This sequence belongs to the SMC family. RAD50 subfamily. In terms of assembly, homodimer. Forms a heterotetramer composed of two Mre11 subunits and two Rad50 subunits. Requires Zn(2+) as cofactor.

In terms of biological role, part of the Rad50/Mre11 complex, which is involved in the early steps of DNA double-strand break (DSB) repair. The complex may facilitate opening of the processed DNA ends to aid in the recruitment of HerA and NurA. Rad50 controls the balance between DNA end bridging and DNA resection via ATP-dependent structural rearrangements of the Rad50/Mre11 complex. The sequence is that of DNA double-strand break repair Rad50 ATPase from Methanosarcina mazei (strain ATCC BAA-159 / DSM 3647 / Goe1 / Go1 / JCM 11833 / OCM 88) (Methanosarcina frisia).